The chain runs to 177 residues: Large ribosomal subunit protein bL19 (177 aa).

It belongs to the bacterial ribosomal protein bL19 family.

Its function is as follows. This protein is located at the 30S-50S ribosomal subunit interface and may play a role in the structure and function of the aminoacyl-tRNA binding site. This chain is Large ribosomal subunit protein bL19, found in Rhizobium meliloti (strain 1021) (Ensifer meliloti).